Consider the following 208-residue polypeptide: Small ribosomal subunit protein uS4 (208 aa).

The S4 RNA-binding domain occupies 98–161; it reads QRLDNVVYRM…KTNPQIVRAI (64 aa).

This sequence belongs to the universal ribosomal protein uS4 family. Part of the 30S ribosomal subunit. Contacts protein S5. The interaction surface between S4 and S5 is involved in control of translational fidelity.

One of the primary rRNA binding proteins, it binds directly to 16S rRNA where it nucleates assembly of the body of the 30S subunit. In terms of biological role, with S5 and S12 plays an important role in translational accuracy. The sequence is that of Small ribosomal subunit protein uS4 from Campylobacter fetus subsp. fetus (strain 82-40).